We begin with the raw amino-acid sequence, 296 residues long: Probable transcription factor At1g44810 (296 aa).

Positions Met1–Asn119 are disordered. Residues Glu19–Gly28 show a composition bias toward acidic residues. The segment covering Thr52–Asn72 has biased composition (polar residues). Residues Arg97–Asn119 show a composition bias toward basic and acidic residues.

This sequence belongs to the GeBP family.

The chain is Probable transcription factor At1g44810 from Arabidopsis thaliana (Mouse-ear cress).